Consider the following 279-residue polypeptide: Tryptophan synthase alpha chain (279 aa).

Catalysis depends on proton acceptor residues E50 and D61.

The protein belongs to the TrpA family. Tetramer of two alpha and two beta chains.

The enzyme catalyses (1S,2R)-1-C-(indol-3-yl)glycerol 3-phosphate + L-serine = D-glyceraldehyde 3-phosphate + L-tryptophan + H2O. Its pathway is amino-acid biosynthesis; L-tryptophan biosynthesis; L-tryptophan from chorismate: step 5/5. Functionally, the alpha subunit is responsible for the aldol cleavage of indoleglycerol phosphate to indole and glyceraldehyde 3-phosphate. This Azorhizobium caulinodans (strain ATCC 43989 / DSM 5975 / JCM 20966 / LMG 6465 / NBRC 14845 / NCIMB 13405 / ORS 571) protein is Tryptophan synthase alpha chain.